Here is a 74-residue protein sequence, read N- to C-terminus: uncharacterized protein (74 aa).

This is an uncharacterized protein from Salmonella typhimurium.